An 86-amino-acid chain; its full sequence is Small ribosomal subunit protein bS16 (86 aa).

This sequence belongs to the bacterial ribosomal protein bS16 family.

The polypeptide is Small ribosomal subunit protein bS16 (Borrelia garinii subsp. bavariensis (strain ATCC BAA-2496 / DSM 23469 / PBi) (Borreliella bavariensis)).